We begin with the raw amino-acid sequence, 1465 residues long: DNA polymerase III PolC-type (1465 aa).

Positions 427 to 583 constitute an Exonuclease domain; it reads YVVFDVETTG…YDAEATGRLL (157 aa).

Belongs to the DNA polymerase type-C family. PolC subfamily.

It localises to the cytoplasm. It carries out the reaction DNA(n) + a 2'-deoxyribonucleoside 5'-triphosphate = DNA(n+1) + diphosphate. Its function is as follows. Required for replicative DNA synthesis. This DNA polymerase also exhibits 3' to 5' exonuclease activity. The protein is DNA polymerase III PolC-type of Streptococcus pyogenes serotype M2 (strain MGAS10270).